We begin with the raw amino-acid sequence, 304 residues long: Small glutamine-rich tetratricopeptide repeat-containing protein beta (304 aa).

TPR repeat units follow at residues 15-49 (LREQ…SPED), 85-118 (ADQL…DPNN), 120-152 (VYYC…DSKY), and 153-186 (SKAY…DPEN). At Lys-131 the chain carries N6-acetyllysine. 3 positions are modified to phosphoserine: Ser-293, Ser-295, and Ser-297.

The protein belongs to the SGT family. Homooligomerize.

Its function is as follows. Co-chaperone that binds directly to HSC70 and HSP70 and regulates their ATPase activity. The polypeptide is Small glutamine-rich tetratricopeptide repeat-containing protein beta (Sgtb) (Mus musculus (Mouse)).